A 261-amino-acid polypeptide reads, in one-letter code: Probable septum site-determining protein MinC (261 aa).

The tract at residues 106–145 (RAPAAKPADEAEPAAVPAVETAAAPAAAAAPEQPSEPAPT) is disordered. Over residues 118–144 (PAAVPAVETAAAPAAAAAPEQPSEPAP) the composition is skewed to low complexity.

Belongs to the MinC family. In terms of assembly, interacts with MinD and FtsZ.

Cell division inhibitor that blocks the formation of polar Z ring septums. Rapidly oscillates between the poles of the cell to destabilize FtsZ filaments that have formed before they mature into polar Z rings. Prevents FtsZ polymerization. The sequence is that of Probable septum site-determining protein MinC from Burkholderia orbicola (strain AU 1054).